The chain runs to 330 residues: Heat-inducible transcription repressor HrcA (330 aa).

The protein belongs to the HrcA family.

Functionally, negative regulator of class I heat shock genes (grpE-dnaK-dnaJ and groELS operons). Prevents heat-shock induction of these operons. The sequence is that of Heat-inducible transcription repressor HrcA from Synechococcus sp. (strain RCC307).